The following is a 300-amino-acid chain: Acetylglutamate kinase (300 aa).

Substrate-binding positions include 73-74, R95, and N197; that span reads GG.

Belongs to the acetylglutamate kinase family. ArgB subfamily.

It is found in the cytoplasm. The catalysed reaction is N-acetyl-L-glutamate + ATP = N-acetyl-L-glutamyl 5-phosphate + ADP. It functions in the pathway amino-acid biosynthesis; L-arginine biosynthesis; N(2)-acetyl-L-ornithine from L-glutamate: step 2/4. In terms of biological role, catalyzes the ATP-dependent phosphorylation of N-acetyl-L-glutamate. The protein is Acetylglutamate kinase of Bordetella pertussis (strain Tohama I / ATCC BAA-589 / NCTC 13251).